Reading from the N-terminus, the 63-residue chain is U2-agatoxin-Ao1v (63 aa).

Residues 1–14 (LLLISAMVGSMIAA) form the signal peptide. Residues 15–28 (VPEEESLQLSEDER) constitute a propeptide that is removed on maturation. 3 disulfide bridges follow: cysteine 31/cysteine 47, cysteine 38/cysteine 52, and cysteine 46/cysteine 62.

It belongs to the neurotoxin 01 (U2-agtx) family. As to expression, expressed by the venom gland.

The protein resides in the secreted. In terms of biological role, insect active toxin causing rapid but reversible paralysis in crickets. No activity shown in mammals. Does not show effect on mammalian voltage-gated calcium channels. The protein is U2-agatoxin-Ao1v of Agelena orientalis (Funnel-web spider).